The chain runs to 127 residues: MPYKKDYKRLAYNTLGYLGEVLIILFLKCKLYHIIKHRYRCPLGEIDIIAHKNKQLVFIEVKTSLFNKNIPITYKQQKSILKSAKYFIAFHRKFANYSIRFDLYFFSLSTGLTHIPNAWQEPQVVYK.

The protein belongs to the UPF0102 family.

This Ehrlichia ruminantium (strain Gardel) protein is UPF0102 protein ERGA_CDS_00540.